The following is a 184-amino-acid chain: ADP-ribosylation factor-like protein 2 (184 aa).

Gly2 is lipidated: N-myristoyl glycine. A GTP-binding site is contributed by 23–30 (GLDNAGKT). The residue at position 45 (Ser45) is a Phosphoserine. GTP is bound by residues 66 to 70 (DVGGQ) and Gly68. A Glycyl lysine isopeptide (Lys-Gly) (interchain with G-Cter in ubiquitin) cross-link involves residue Lys71. Residue 125–128 (NKQD) coordinates GTP.

Belongs to the small GTPase superfamily. Arf family. In terms of assembly, found in a complex with ARL2, ARL2BP and SLC25A6. Found in a complex with at least ARL2, PPP2CB, PPP2R1A, PPP2R2A, PPP2R5E and TBCD. Interacts with ELMOD2. The GTP-bound form interacts with ARL2BP. The GDP-bound form interacts preferentially with TBCD. Interacts with UNC119. Found in a complex with ARL2, ARL2BP and SLC25A4. The GTP-bound form interacts with PDE6D. Not N-myristoylated. Expressed in brain, retina, lung, cerebellum, liver, kidney, hippocampus, spleen, cortex and heart (at protein level).

It localises to the mitochondrion intermembrane space. It is found in the cytoplasm. The protein localises to the cytoskeleton. The protein resides in the microtubule organizing center. Its subcellular location is the centrosome. It localises to the nucleus. In terms of biological role, small GTP-binding protein which cycles between an inactive GDP-bound and an active GTP-bound form, and the rate of cycling is regulated by guanine nucleotide exchange factors (GEF) and GTPase-activating proteins (GAP). GTP-binding protein that does not act as an allosteric activator of the cholera toxin catalytic subunit. Regulates formation of new microtubules and centrosome integrity. Prevents the TBCD-induced microtubule destruction. Participates in association with TBCD, in the disassembly of the apical junction complexes. Antagonizes the effect of TBCD on epithelial cell detachment and tight and adherens junctions disassembly. Together with ARL2, plays a role in the nuclear translocation, retention and transcriptional activity of STAT3. Component of a regulated secretory pathway involved in Ca(2+)-dependent release of acetylcholine. Required for normal progress through the cell cycle. The chain is ADP-ribosylation factor-like protein 2 (Arl2) from Rattus norvegicus (Rat).